The following is a 1071-amino-acid chain: ATP-dependent helicase/deoxyribonuclease subunit B (1071 aa).

The protein belongs to the helicase family. AddB/RexB type 2 subfamily. Heterodimer of AddA and RexB. The cofactor is Mg(2+).

In terms of biological role, the heterodimer acts as both an ATP-dependent DNA helicase and an ATP-dependent, dual-direction single-stranded exonuclease. Recognizes the chi site generating a DNA molecule suitable for the initiation of homologous recombination. This subunit has 5' -&gt; 3' nuclease activity but not helicase activity. The polypeptide is ATP-dependent helicase/deoxyribonuclease subunit B (Streptococcus pyogenes serotype M28 (strain MGAS6180)).